Here is a 232-residue protein sequence, read N- to C-terminus: Sugar fermentation stimulation protein homolog (232 aa).

The protein belongs to the SfsA family.

The protein is Sugar fermentation stimulation protein homolog of Pelagibacter ubique (strain HTCC1062).